Reading from the N-terminus, the 322-residue chain is (12E)-labda-8(17),12,14-triene synthase (322 aa).

Over residues 1-11 (MNDATRTSTTP) the composition is skewed to polar residues. A disordered region spans residues 1-26 (MNDATRTSTTPPALPMPDLRDSFPGP). The Mg(2+) site is built by D93 and E98. Residues 93–98 (DDAHGE) carry the DDXXXE motif motif. Substrate is bound at residue R188. 2 residues coordinate Mg(2+): N234 and S238. Residues 234–242 (NDLASYAKE) carry the NXXXSXXXE motif motif. K241 is a substrate binding site. Residue E242 participates in Mg(2+) binding. Residue 319 to 320 (RY) participates in substrate binding.

This sequence belongs to the terpene synthase family. Mg(2+) is required as a cofactor.

The enzyme catalyses (+)-copalyl diphosphate = (12E)-labda-8(17),12,14-triene + diphosphate. Its function is as follows. Involved in the biosynthesis of the labdane-type bicyclic diterpene labda-8(17),12(E),14-triene. Catalyzes the conversion of (+)-copalyl diphosphate to yield labda-8(17),12(E),14-triene. This Streptomyces anulatus (Streptomyces chrysomallus) protein is (12E)-labda-8(17),12,14-triene synthase.